The primary structure comprises 113 residues: Iron-sulfur cluster insertion protein ErpA (113 aa).

Iron-sulfur cluster contacts are provided by Cys41, Cys105, and Cys107.

It belongs to the HesB/IscA family. Homodimer. Iron-sulfur cluster serves as cofactor.

Required for insertion of 4Fe-4S clusters for at least IspG. The protein is Iron-sulfur cluster insertion protein ErpA of Aliivibrio fischeri (strain ATCC 700601 / ES114) (Vibrio fischeri).